The chain runs to 90 residues: Probable Fe(2+)-trafficking protein (90 aa).

The protein belongs to the Fe(2+)-trafficking protein family.

Its function is as follows. Could be a mediator in iron transactions between iron acquisition and iron-requiring processes, such as synthesis and/or repair of Fe-S clusters in biosynthetic enzymes. The sequence is that of Probable Fe(2+)-trafficking protein from Vibrio atlanticus (strain LGP32) (Vibrio splendidus (strain Mel32)).